A 588-amino-acid chain; its full sequence is Glutathione/L-cysteine transport system ATP-binding/permease protein CydD (588 aa).

At 1-15 (MNKSRQKELTRWLKQ) the chain is on the cytoplasmic side. The next 2 membrane-spanning stretches (helical) occupy residues 16–36 (QSVI…VSGI) and 37–57 (LIIA…MENI). The 287-residue stretch at 20-306 (SQRWLNISRL…APEFFQPLRD (287 aa)) folds into the ABC transmembrane type-1 domain. Residues 58–136 (PREALLLPFT…LEQIDDMHDY (79 aa)) are Cytoplasmic-facing. A helical transmembrane segment spans residues 137–157 (YARYLPQMALAVSVPLLIVVA). Residues 158–161 (IFPS) lie on the Periplasmic side of the membrane. The helical transmembrane segment at 162-182 (NWAAALILLGTAPLIPLFMAL) threads the bilayer. Residues 183–249 (VGMGAADANR…MEVLRLAFLS (67 aa)) are Cytoplasmic-facing. The helical transmembrane segment at 250–270 (SGILEFFTSLSIALVAVYFGF) threads the bilayer. Residues 271 to 276 (SYLGEL) are Periplasmic-facing. Residues 277 to 297 (DFGHYDTGVTLAAGFLALILA) traverse the membrane as a helical segment. The Cytoplasmic portion of the chain corresponds to 298 to 573 (PEFFQPLRDL…QGRYAELSVA (276 aa)). Residues 339–572 (EAELASTDPV…EQGRYAELSV (234 aa)) enclose the ABC transporter domain. An ATP-binding site is contributed by 373-380 (LPAGQRAV).

Belongs to the ABC transporter superfamily. Cysteine exporter (TC 3.A.1.129.1) family. Forms a heterodimer with CydC.

Its subcellular location is the cell inner membrane. The catalysed reaction is L-cysteine(in) + ATP + H2O = L-cysteine(out) + ADP + phosphate + H(+). It carries out the reaction glutathione(in) + ATP + H2O = glutathione(out) + ADP + phosphate + H(+). With respect to regulation, ATPase activity is stimulated by various thiol compounds. The presence of heme leads to a further enhancement of thiol-stimulated ATPase activity, although a large excess of heme inhibits activity. Glutathione transport is inhibited by sodium orthovanadate, an inhibitor of ABC-type transport systems, but not by the proton ionophore carbonyl cyanide m-chlorophenylhydrazone (CCCP). In terms of biological role, part of the ABC transporter complex CydDC that exports the reduced low-molecular-weight thiols cysteine and glutathione to the periplasm. Export of these thiol-containing redox-active molecules may be crucial for redox homeostasis in the periplasm, permitting correct assembly of various respiratory complexes and formation of correct disulfide bonds in periplasmic and secreted proteins. CydD contains transmembrane domains (TMD), which form a pore in the inner membrane, and an ATP-binding domain (NBD), which is responsible for energy generation. Required for the assembly of functional cytochrome bd-type quinol oxidases and periplasmic c-type cytochromes. Overexpression of CydDC under anaerobic conditions also results in the formation of a heme biosynthesis-derived pigment, P-574. CydDC binds heme b, but heme is probably not transported by the complex and instead has a role in regulating ATPase activity. Its function is as follows. Conversely, a more recent study suggests an alternative function of CydDC: authors suggest that CydDC does not mediate the export of L-cysteine but rather reduces cytoplasmic L-cystine to L-cysteine. The principle function of CydDC would be to maintain the reduced state of cytoplasmic L-cysteine, thereby providing an important connection between sulfur metabolism, oxidative stress and resistance to antibiotics. This is Glutathione/L-cysteine transport system ATP-binding/permease protein CydD from Escherichia coli (strain K12).